The following is a 148-amino-acid chain: UPF0756 membrane protein YeaL (148 aa).

4 consecutive transmembrane segments (helical) span residues 14-34, 51-71, 86-106, and 121-141; these read ALGF…LIIV, LTVG…SGTL, LVAI…VALM, and VLGV…AGLV.

The protein belongs to the UPF0756 family.

It is found in the cell membrane. This chain is UPF0756 membrane protein YeaL, found in Salmonella arizonae (strain ATCC BAA-731 / CDC346-86 / RSK2980).